The sequence spans 351 residues: UDP-N-acetylenolpyruvoylglucosamine reductase (351 aa).

The FAD-binding PCMH-type domain maps to 11-213 (GVGGSIACFI…KQVRDQVLRI (203 aa)). Arginine 158 is a catalytic residue. Catalysis depends on serine 239, which acts as the Proton donor. Glutamate 343 is a catalytic residue.

This sequence belongs to the MurB family. Requires FAD as cofactor.

Its subcellular location is the cytoplasm. The enzyme catalyses UDP-N-acetyl-alpha-D-muramate + NADP(+) = UDP-N-acetyl-3-O-(1-carboxyvinyl)-alpha-D-glucosamine + NADPH + H(+). The protein operates within cell wall biogenesis; peptidoglycan biosynthesis. In terms of biological role, cell wall formation. The sequence is that of UDP-N-acetylenolpyruvoylglucosamine reductase from Tropheryma whipplei (strain Twist) (Whipple's bacillus).